The following is a 247-amino-acid chain: Cell division protein ZapD (247 aa).

The protein belongs to the ZapD family. Interacts with FtsZ.

The protein localises to the cytoplasm. In terms of biological role, cell division factor that enhances FtsZ-ring assembly. Directly interacts with FtsZ and promotes bundling of FtsZ protofilaments, with a reduction in FtsZ GTPase activity. This Klebsiella pneumoniae subsp. pneumoniae (strain ATCC 700721 / MGH 78578) protein is Cell division protein ZapD.